We begin with the raw amino-acid sequence, 197 residues long: Protein Hikeshi (197 aa).

The interval 18 to 55 is required for F-X-F-G repeats-nucleoporins recognition and nuclear import; the sequence is VAEDKFVFDLPDYENINHVVVFMLGTVPFPEGMGGSVY. Residues 124-134 form a flexible linker region involved in nuclear import of HSP70 proteins region; sequence QTPVGNAAVSS.

This sequence belongs to the OPI10 family. Forms an asymmetric homodimer; required for binding and nuclear import of HSP70 proteins. Interacts with ATP-bound HSP70 proteins. Interacts with NUP62 and NUP153 (via F-X-F-G repeats). Interacts with HSPA8.

It is found in the cytoplasm. The protein localises to the cytosol. It localises to the nucleus. In terms of biological role, acts as a specific nuclear import carrier for HSP70 proteins following heat-shock stress: acts by mediating the nucleoporin-dependent translocation of ATP-bound HSP70 proteins into the nucleus. HSP70 proteins import is required to protect cells from heat shock damages. Does not translocate ADP-bound HSP70 proteins into the nucleus. The protein is Protein Hikeshi of Bos taurus (Bovine).